An 88-amino-acid polypeptide reads, in one-letter code: uncharacterized protein (88 aa).

It to E.coli YihD.

This is an uncharacterized protein from Haemophilus influenzae (strain ATCC 51907 / DSM 11121 / KW20 / Rd).